The primary structure comprises 341 residues: L-threonine 3-dehydrogenase (341 aa).

Cys-38 contacts Zn(2+). Catalysis depends on charge relay system residues Thr-40 and His-43. Residues His-63, Glu-64, Cys-93, Cys-96, Cys-99, and Cys-107 each contribute to the Zn(2+) site. Residues Ile-175, Asp-195, Arg-200, 262 to 264 (LGI), and 286 to 287 (IY) contribute to the NAD(+) site.

Belongs to the zinc-containing alcohol dehydrogenase family. In terms of assembly, homotetramer. Requires Zn(2+) as cofactor.

The protein localises to the cytoplasm. The catalysed reaction is L-threonine + NAD(+) = (2S)-2-amino-3-oxobutanoate + NADH + H(+). The protein operates within amino-acid degradation; L-threonine degradation via oxydo-reductase pathway; glycine from L-threonine: step 1/2. In terms of biological role, catalyzes the NAD(+)-dependent oxidation of L-threonine to 2-amino-3-ketobutyrate. The protein is L-threonine 3-dehydrogenase of Shigella dysenteriae serotype 1 (strain Sd197).